Consider the following 192-residue polypeptide: MVYPIRLYGDPVLRRKARPVEDFSGIKRLAEDMLETMFEAKGVGLAAPQIGLSQRLFVAVEYADEPEGEEERPLRELVRRVYVVANPVITYREGLVEGTEGCLSLPGLYSEEVPRAERIRVEYQDEEGRGRVLELEGYMARVFQHEIDHLDGILFFERLPKPKREAFLEANRAELVRFQKEARALLKELSQG.

Residues Cys-102 and His-145 each coordinate Fe cation. Residue Glu-146 is part of the active site. His-149 contacts Fe cation.

This sequence belongs to the polypeptide deformylase family. It depends on Fe(2+) as a cofactor.

It catalyses the reaction N-terminal N-formyl-L-methionyl-[peptide] + H2O = N-terminal L-methionyl-[peptide] + formate. In terms of biological role, removes the formyl group from the N-terminal Met of newly synthesized proteins. Requires at least a dipeptide for an efficient rate of reaction. N-terminal L-methionine is a prerequisite for activity but the enzyme has broad specificity at other positions. This is Peptide deformylase from Thermus thermophilus (strain ATCC BAA-163 / DSM 7039 / HB27).